The following is a 115-amino-acid chain: UPF0102 protein SYO3AOP1_0546 (115 aa).

The protein belongs to the UPF0102 family.

The polypeptide is UPF0102 protein SYO3AOP1_0546 (Sulfurihydrogenibium sp. (strain YO3AOP1)).